We begin with the raw amino-acid sequence, 79 residues long: Acyl carrier protein (79 aa).

Positions 2 to 77 constitute a Carrier domain; sequence SDIEQRVKKI…QAIDYAKAHV (76 aa). Position 37 is an O-(pantetheine 4'-phosphoryl)serine (S37).

The protein belongs to the acyl carrier protein (ACP) family. In terms of processing, 4'-phosphopantetheine is transferred from CoA to a specific serine of apo-ACP by AcpS. This modification is essential for activity because fatty acids are bound in thioester linkage to the sulfhydryl of the prosthetic group.

The protein resides in the cytoplasm. It functions in the pathway lipid metabolism; fatty acid biosynthesis. In terms of biological role, carrier of the growing fatty acid chain in fatty acid biosynthesis. In Janthinobacterium sp. (strain Marseille) (Minibacterium massiliensis), this protein is Acyl carrier protein.